The primary structure comprises 416 residues: E3 ubiquitin-protein ligase makorin-2 (416 aa).

C3H1-type zinc fingers lie at residues 2-29 (STKQITCRYFMHGVCREGSQCLFSHDLA) and 31-58 (SKPSTICKYYQKGYCAYGTRCRYDHTRP). Basic and acidic residues predominate over residues 113–122 (NLSGMAERKT). Positions 113 to 142 (NLSGMAERKTQPSMVSNPGSCSDPQPSPEM) are disordered. Polar residues predominate over residues 123-136 (QPSMVSNPGSCSDP). Ser139 is subject to Phosphoserine. Residues 165-192 (SNEQQLCPYAAAGECRFGDACVYLHGEV) form a C3H1-type 3 zinc finger. The makorin-type Cys-His stretch occupies residues 193–222 (CEICRLQVLHPFDPEQRKAHEKICMLTFEH). The RING-type zinc finger occupies 238–292 (CSICMEVILEKASASERRFGILSNCNHTYCLSCIRQWRCAKQFENPIIKSCPECR). The C3H1-type 4 zinc finger occupies 321–350 (GMGKKACKYFEQGKGTCPFGSKCLYRHAYP).

As to quaternary structure, interacts with PDLIM2 (via LIM zinc-binding domain). Interacts with RELA. Expressed in sperm, with significantly reduced expression in sperm of patients with oligoasthenoteratozoospermia (at protein level). Widely expressed with expression in testis, ovary, small intestine, colon, peripheral blood leukocytes, fetal liver, bone marrow, thymus, lymph node and spleen.

Its subcellular location is the cytoplasm. It localises to the nucleus. The enzyme catalyses S-ubiquitinyl-[E2 ubiquitin-conjugating enzyme]-L-cysteine + [acceptor protein]-L-lysine = [E2 ubiquitin-conjugating enzyme]-L-cysteine + N(6)-ubiquitinyl-[acceptor protein]-L-lysine.. The protein operates within protein modification; protein ubiquitination. Functionally, E3 ubiquitin ligase catalyzing the covalent attachment of ubiquitin moieties onto substrate proteins. Promotes the polyubiquitination and proteasome-dependent degradation of RELA/p65, thereby suppressing RELA-mediated NF-kappaB transactivation and negatively regulating inflammatory responses. Plays a role in the regulation of spermiation and in male fertility. In Homo sapiens (Human), this protein is E3 ubiquitin-protein ligase makorin-2 (MKRN2).